Reading from the N-terminus, the 398-residue chain is 1-deoxy-D-xylulose 5-phosphate reductoisomerase (398 aa).

6 residues coordinate NADPH: Thr-14, Gly-15, Ser-16, Ile-17, Gln-42, and Asn-128. Residue Lys-129 coordinates 1-deoxy-D-xylulose 5-phosphate. Glu-130 contacts NADPH. Asp-154 contacts Mn(2+). 1-deoxy-D-xylulose 5-phosphate-binding residues include Ser-155, Glu-156, Ser-185, and His-208. Glu-156 contacts Mn(2+). Gly-214 is a binding site for NADPH. 1-deoxy-D-xylulose 5-phosphate is bound by residues Ser-221, Asn-226, Lys-227, and Glu-230. Glu-230 lines the Mn(2+) pocket.

It belongs to the DXR family. It depends on Mg(2+) as a cofactor. Mn(2+) serves as cofactor.

The catalysed reaction is 2-C-methyl-D-erythritol 4-phosphate + NADP(+) = 1-deoxy-D-xylulose 5-phosphate + NADPH + H(+). The protein operates within isoprenoid biosynthesis; isopentenyl diphosphate biosynthesis via DXP pathway; isopentenyl diphosphate from 1-deoxy-D-xylulose 5-phosphate: step 1/6. Catalyzes the NADPH-dependent rearrangement and reduction of 1-deoxy-D-xylulose-5-phosphate (DXP) to 2-C-methyl-D-erythritol 4-phosphate (MEP). This is 1-deoxy-D-xylulose 5-phosphate reductoisomerase from Dechloromonas aromatica (strain RCB).